Here is a 141-residue protein sequence, read N- to C-terminus: MAIIIGADTAGSKLKDVVKDFLVGENFEVVDVTQDGQDFVDVTLAVAAEVNKQEENLGIVIDAYGAGPFMVATKIKGMVAAEVSDERSAYMTRGHNNSRMITMGSEIVGEGLAKNIAKGFVNGKYDGGRHQIRVDMLNKMC.

This sequence belongs to the LacAB/RpiB family. Heteromultimeric protein consisting of LacA and LacB.

It carries out the reaction aldehydo-D-galactose 6-phosphate = keto-D-tagatose 6-phosphate. The protein operates within carbohydrate metabolism; D-galactose 6-phosphate degradation; D-tagatose 6-phosphate from D-galactose 6-phosphate: step 1/1. In Streptococcus agalactiae serotype III (strain NEM316), this protein is Galactose-6-phosphate isomerase subunit LacA 1.